Consider the following 493-residue polypeptide: Na(+)/H(+) antiporter subunit D (493 aa).

The next 14 helical transmembrane spans lie at 4-23 (LVILPILIPFIVGSFLILFA), 30-52 (RVISGFAVVGMLLVSIYLAVDVY), 72-94 (LVADLFATMMVILASIVGVVCLF), 107-126 (YYFYPFYFFLLAGVNGAFLT), 130-149 (FNLFVFFEVMLIASYILIVL), 162-184 (YVVINVFASILFIVGVAYIYSIT), 204-226 (VLNVIAVIFLVVFAMKGGLFPLY), 233-255 (YFGPPAAIAALFGGLLTKVGIYA), 270-292 (FTHTLILILAGLTMFFGVLGAVS), 299-321 (ILSYHIISQVGYMVMGLGIYTQL), 325-347 (GAIYYIAHHIIVKAALFLFAGAT), 368-390 (WLAWMFFISAISLAGIPPLSGFF), 405-427 (YIIAAVALAVGLLTLFSMMKIFI), and 448-470 (LLLPIVPLVALTIILGFAAEPIF).

It belongs to the CPA3 antiporters (TC 2.A.63) subunit D family. As to quaternary structure, forms a heterooligomeric complex that consists of seven subunits: MrpA, MrpB, MrpC, MrpD, MrpE, MrpF and MrpG.

Its subcellular location is the cell membrane. Functionally, mnh complex is a Na(+)Li(+)/H(+) antiporter involved in Na(+) and/or Li(+) excretion and Na(+) resistance. Na(+)/H(+) antiport consumes a transmembrane electrical potential, and is thus inferred to be electrogenic. Does not transport K(+), Ca(2+) or Mg(2+). Its function is as follows. Mrp complex is a Na(+)/H(+) antiporter involved in Na(+) excretion and Na(+) resistance. The sequence is that of Na(+)/H(+) antiporter subunit D (mrpD) from Alkalihalophilus pseudofirmus (strain ATCC BAA-2126 / JCM 17055 / OF4) (Bacillus pseudofirmus).